A 547-amino-acid chain; its full sequence is NXPE family member 1 (547 aa).

An N-terminal signal peptide occupies residues 1-21 (MSSNTMLQKTLLILISFSVVT). 2 N-linked (GlcNAc...) asparagine glycosylation sites follow: N39 and N211.

This sequence belongs to the NXPE family.

The protein resides in the secreted. The sequence is that of NXPE family member 1 (NXPE1) from Homo sapiens (Human).